The following is a 138-amino-acid chain: Large-conductance mechanosensitive channel (138 aa).

Transmembrane regions (helical) follow at residues 15–35, 38–58, and 80–100; these read VDLA…NSVV, IFMP…MFIQ, and GNFI…FFLV.

The protein belongs to the MscL family. In terms of assembly, homopentamer.

Its subcellular location is the cell inner membrane. Its function is as follows. Channel that opens in response to stretch forces in the membrane lipid bilayer. May participate in the regulation of osmotic pressure changes within the cell. The chain is Large-conductance mechanosensitive channel from Bartonella bacilliformis (strain ATCC 35685 / KC583 / Herrer 020/F12,63).